The primary structure comprises 405 residues: Beta-citrylglutamate synthase B (405 aa).

The ATP-grasp domain occupies 115-300 (FQELAGHGVP…VAGIVADFVL (186 aa)). ATP contacts are provided by residues lysine 154, 189–199 (QEYVKESHGRD), and arginine 215. Aspartate 260, glutamate 273, and asparagine 275 together coordinate Mg(2+). Aspartate 260, glutamate 273, and asparagine 275 together coordinate Mn(2+). The interval 359-387 (AMSTMSTSSTSSESEADLTETGPTPVGAN) is disordered. Residues 360-371 (MSTMSTSSTSSE) are compositionally biased toward low complexity.

Belongs to the RimK family. It depends on Mg(2+) as a cofactor. Mn(2+) is required as a cofactor.

It is found in the cytoplasm. It carries out the reaction citrate + L-glutamate + ATP = beta-citrylglutamate + ADP + phosphate + H(+). The catalysed reaction is N-acetyl-L-aspartate + L-glutamate + ATP = N-acetyl-L-aspartyl-L-glutamate + ADP + phosphate + H(+). Catalyzes the synthesis of beta-citryl-L-glutamate and N-acetyl-L-aspartyl-L-glutamate. Beta-citryl-L-glutamate is synthesized more efficiently than N-acetyl-L-aspartyl-L-glutamate. This Danio rerio (Zebrafish) protein is Beta-citrylglutamate synthase B (rimklb).